The sequence spans 100 residues: Sodium-influx-stimulating peptide (100 aa).

Residues Met-1 to Ser-23 form the signal peptide.

Post-translationally, three disulfide bonds are present. As to expression, expressed by the yellow cells, peptidergic (neuroendocrine) neurons of the central nervous system.

In terms of biological role, stimulates integumental Na(+) uptake. Controls the activity of sodium pumps in the integument, pericardium, ureter and nephridial gland. The protein is Sodium-influx-stimulating peptide (SIS) of Lymnaea stagnalis (Great pond snail).